Consider the following 1514-residue polypeptide: ABC transporter C family member 5 (1514 aa).

Transmembrane regions (helical) follow at residues 16–36 (LLEL…LFAV), 76–96 (FGFN…VLVL), 111–131 (FVLC…FLVL), 142–162 (PFLV…TMYV), 177–197 (SHVV…FLAW), 312–332 (VFAG…SYFV), 334–354 (YLGG…IFFT), 421–441 (WYLH…AILY), 446–466 (IAAV…IPLA), and 533–553 (FIFW…SIFL). Positions 307 to 588 (AACNAVFAGL…FPDLVSMMAQ (282 aa)) constitute an ABC transmembrane type-1 1 domain. The ABC transporter 1 domain maps to 622–845 (IEIKDGVFCW…GTDFKALVSA (224 aa)). Position 657-664 (657-664 (GTVGSGKS)) interacts with ATP. A coiled-coil region spans residues 899–927 (ASDLKAIKEKKKKAKRSRKKQLVQEEERV). 6 consecutive transmembrane segments (helical) span residues 946-966 (GALI…QIAS), 986-1006 (PTLL…FIFV), 1078-1098 (IVAV…PVAV), 1117-1137 (IVSI…AGAA), 1155-1175 (LLDC…WLCL), and 1180-1200 (LSTL…HGTI). The ABC transmembrane type-1 2 domain maps to 949–1231 (IPLIILAQAA…WILSFCKLEN (283 aa)). The ABC transporter 2 domain maps to 1268 to 1502 (IELVDVKVRY…KSSMFLKLVT (235 aa)). ATP is bound at residue 1302-1309 (GRTGSGKS).

It belongs to the ABC transporter superfamily. ABCC family. Conjugate transporter (TC 3.A.1.208) subfamily. In terms of tissue distribution, ubiquitous, mostly in vascular tissues and epidermis, including guard cells.

It localises to the membrane. It carries out the reaction ATP + H2O + xenobioticSide 1 = ADP + phosphate + xenobioticSide 2.. (E(2)17G) transport activity in negatively regulated by organic anions such as oestradiol-3-sulfate, luteolin-7-O-diglucuronide-4'-O-glucuronide, glycocholate, vanadate and the sulfonylurea glibenclamide, and, to a lower extent, by bafilomycin A1, NH(4)Cl, GSH, GSSG and DNB-GS. In terms of biological role, pump for glutathione S-conjugates. Involved in regulation of K(+) and Na(+) cell content. Mediates resistance to NaCl and Li(+), confers sensitivity to sulfonylurea drugs such as glibenclamide (inducer of stomatal opening), and required for stomatal opening regulation by auxin, abscisic acid (ABA) and external Ca(2+). Transports oestradiol-17-(beta-D-glucuronide) (E(2)17G). Involved in the root auxin content regulation that controls the transition from primary root elongation to lateral root formation. Plays a role in ABA-mediated germination inhibition. High-affinity inositol hexakisphosphate transporter that plays a role in guard cell signaling and phytic acid storage. Required for phytic acid accumulation in developing seeds. Phytic acid is the primary storage form of phosphorus in cereal grains and other plant seeds. This is ABC transporter C family member 5 (ABCC5) from Arabidopsis thaliana (Mouse-ear cress).